The chain runs to 118 residues: Large ribosomal subunit protein bL20 (118 aa).

It belongs to the bacterial ribosomal protein bL20 family.

Binds directly to 23S ribosomal RNA and is necessary for the in vitro assembly process of the 50S ribosomal subunit. It is not involved in the protein synthesizing functions of that subunit. The polypeptide is Large ribosomal subunit protein bL20 (Shigella flexneri serotype 5b (strain 8401)).